A 218-amino-acid chain; its full sequence is Ribonuclease T (218 aa).

In terms of domain architecture, Exonuclease spans 22–196 (VVVDVETAGF…YDAMKTAELF (175 aa)). Positions 25, 27, 183, and 188 each coordinate Mg(2+). The Proton donor/acceptor role is filled by H183.

Belongs to the RNase T family. As to quaternary structure, homodimer. Mg(2+) serves as cofactor.

In terms of biological role, trims short 3' overhangs of a variety of RNA species, leaving a one or two nucleotide 3' overhang. Responsible for the end-turnover of tRNA: specifically removes the terminal AMP residue from uncharged tRNA (tRNA-C-C-A). Also appears to be involved in tRNA biosynthesis. This is Ribonuclease T from Hahella chejuensis (strain KCTC 2396).